A 337-amino-acid chain; its full sequence is tRNA N6-adenosine threonylcarbamoyltransferase (337 aa).

Residues H111 and H115 each coordinate Fe cation. Substrate-binding positions include 134 to 138 (LVSGG), D167, G180, and N272. D300 contributes to the Fe cation binding site.

Belongs to the KAE1 / TsaD family. It depends on Fe(2+) as a cofactor.

The protein resides in the cytoplasm. The catalysed reaction is L-threonylcarbamoyladenylate + adenosine(37) in tRNA = N(6)-L-threonylcarbamoyladenosine(37) in tRNA + AMP + H(+). In terms of biological role, required for the formation of a threonylcarbamoyl group on adenosine at position 37 (t(6)A37) in tRNAs that read codons beginning with adenine. Is involved in the transfer of the threonylcarbamoyl moiety of threonylcarbamoyl-AMP (TC-AMP) to the N6 group of A37, together with TsaE and TsaB. TsaD likely plays a direct catalytic role in this reaction. The polypeptide is tRNA N6-adenosine threonylcarbamoyltransferase (Shewanella sediminis (strain HAW-EB3)).